A 253-amino-acid polypeptide reads, in one-letter code: Phosphoadenosine 5'-phosphosulfate reductase (253 aa).

Cys239 serves as the catalytic Nucleophile; cysteine thiosulfonate intermediate.

The protein belongs to the PAPS reductase family. CysH subfamily.

The protein localises to the cytoplasm. The enzyme catalyses [thioredoxin]-disulfide + sulfite + adenosine 3',5'-bisphosphate + 2 H(+) = [thioredoxin]-dithiol + 3'-phosphoadenylyl sulfate. It functions in the pathway sulfur metabolism; hydrogen sulfide biosynthesis; sulfite from sulfate: step 3/3. Catalyzes the formation of sulfite from phosphoadenosine 5'-phosphosulfate (PAPS) using thioredoxin as an electron donor. The polypeptide is Phosphoadenosine 5'-phosphosulfate reductase (Aliivibrio fischeri (strain ATCC 700601 / ES114) (Vibrio fischeri)).